Consider the following 75-residue polypeptide: Large ribosomal subunit protein bL31 (75 aa).

Positions 16, 18, 38, and 41 each coordinate Zn(2+).

This sequence belongs to the bacterial ribosomal protein bL31 family. Type A subfamily. Part of the 50S ribosomal subunit. It depends on Zn(2+) as a cofactor.

Its function is as follows. Binds the 23S rRNA. The sequence is that of Large ribosomal subunit protein bL31 from Mycolicibacterium smegmatis (strain ATCC 700084 / mc(2)155) (Mycobacterium smegmatis).